The sequence spans 1003 residues: Retinoblastoma-related protein 1 (1003 aa).

A domain A region spans residues 405 to 607 (TPVSTAMTTA…EKGSSMYNSL (203 aa)). Residues 405 to 860 (TPVSTAMTTA…NEMFIPSVKP (456 aa)) form a pocket region. Residues 608-729 (AVAKPSLAAE…PGGGGETCAE (122 aa)) are spacer. The tract at residues 730 to 860 (TAINVFFGKI…NEMFIPSVKP (131 aa)) is domain B. The tract at residues 868-899 (AGNNSEKNDHNDGQGPASPKPSPFPKLPDMSP) is disordered.

The protein belongs to the retinoblastoma protein (RB) family. Expressed in roots, stems, leaves and flowers.

It is found in the nucleus. Regulator of biological processes that recruits a histone deacetylase to control gene transcription. Formation of stable complexes with geminiviridae replication-associated proteins may create a cellular environment which favors viral DNA replication. May play a role in the entry into mitosis, negatively regulating the cell proliferation during leaf, stem, and flower development. Critical regulator of the endocycle. The polypeptide is Retinoblastoma-related protein 1 (RBR1) (Nicotiana benthamiana).